Consider the following 798-residue polypeptide: Acetamidase regulatory protein (798 aa).

Residues 20–50 (CVHCHRRKVRCDARLVGLPCSNCRSAGKTDC) constitute a DNA-binding region (zn(2)-C6 fungal-type). 3 disordered regions span residues 68 to 96 (VPIR…PPNA), 115 to 172 (ANRV…ESRA), and 632 to 714 (LRTT…TLSA). 2 stretches are compositionally biased toward low complexity: residues 82-94 (KPIS…SEPP) and 133-147 (TRSN…QYQN). Positions 632–641 (LRTTTSDRPR) are enriched in basic and acidic residues. A compositionally biased stretch (polar residues) spans 644–663 (SNLSNNSTNSPASQQKNTSG). Residues 678-687 (PSAPSIPPLQ) show a composition bias toward pro residues.

It localises to the nucleus. Its function is as follows. Positively regulates the expression of 5 genes involved in the catabolism of certain amides (amdS), omega amino acids (gatA and gabA), and lactams (lamA and lamB) in the presence of omega amino acid inducers. The sequence is that of Acetamidase regulatory protein (amdR) from Emericella nidulans (strain FGSC A4 / ATCC 38163 / CBS 112.46 / NRRL 194 / M139) (Aspergillus nidulans).